Here is a 163-residue protein sequence, read N- to C-terminus: Lipoprotein signal peptidase (163 aa).

A run of 3 helical transmembrane segments spans residues 7 to 27 (LSFL…KYLV), 64 to 84 (WQKY…VYLL), and 99 to 119 (ALII…GFVV). Catalysis depends on residues Asp120 and Asp138. A helical membrane pass occupies residues 133–153 (VFNVADIAICVGVGLLILDSF).

This sequence belongs to the peptidase A8 family.

Its subcellular location is the cell inner membrane. The catalysed reaction is Release of signal peptides from bacterial membrane prolipoproteins. Hydrolyzes -Xaa-Yaa-Zaa-|-(S,diacylglyceryl)Cys-, in which Xaa is hydrophobic (preferably Leu), and Yaa (Ala or Ser) and Zaa (Gly or Ala) have small, neutral side chains.. The protein operates within protein modification; lipoprotein biosynthesis (signal peptide cleavage). This protein specifically catalyzes the removal of signal peptides from prolipoproteins. This chain is Lipoprotein signal peptidase, found in Actinobacillus succinogenes (strain ATCC 55618 / DSM 22257 / CCUG 43843 / 130Z).